The chain runs to 1135 residues: Vinculin (1135 aa).

The tract at residues 2-835 (PVFHTRTIES…GAVAKVREAF (834 aa)) is N-terminal globular head. Tyr-100 is modified (phosphotyrosine). A talin-interaction region spans residues 168–208 (MTKMAKMIDERQQELTHQEHRVMLVNSMNTVKELLPVLISA). Tandem repeats lie at residues 259-369 (ASKD…KVEN), 370-479 (AARK…KTNR), and 480-589 (AVAN…RMQE). A 3 X 112 AA tandem repeats region spans residues 259 to 589 (ASKDTEAMKR…LKDLKARMQE (331 aa)). A phosphotyrosine mark is found at Tyr-537 and Tyr-822. The segment at 836-878 (QPQEPDFPPPPPDLEHLHLTDELAPPKPPLPEGEVPPPRPPPP) is linker (Pro-rich). The segment at 837-888 (PQEPDFPPPPPDLEHLHLTDELAPPKPPLPEGEVPPPRPPPPEEKDEEFPEQ) is disordered. Residues 860–876 (PPKPPLPEGEVPPPRPP) show a composition bias toward pro residues. Residues 879 to 1135 (EEKDEEFPEQ…RWVRKTPWYQ (257 aa)) are C-terminal tail. 2 facilitates phospholipid membrane insertion regions span residues 1004–1047 (RLVR…KRIR) and 1121–1135 (AGFTLRWVRKTPWYQ). The residue at position 1134 (Tyr-1134) is a Phosphotyrosine; by SRC-type Tyr-kinases.

Belongs to the vinculin/alpha-catenin family. In terms of assembly, exhibits self-association properties. Interacts with APBB1IP, NRAP and TLN1. Interacts with CTNNB1 and this interaction is necessary for its localization to the cell-cell junctions and for its function in regulating cell surface expression of E-cadherin. In terms of processing, phosphorylated; on serines, threonines and tyrosines. Phosphorylation on Tyr-1134 in activated platelets affects head-tail interactions and cell spreading but has no effect on actin binding nor on localization to focal adhesion plaques. Post-translationally, acetylated; mainly by myristic acid but also by a small amount of palmitic acid. In terms of tissue distribution, isoform Metavinculin is muscle-specific.

It localises to the cell membrane. The protein resides in the cell junction. It is found in the adherens junction. Its subcellular location is the focal adhesion. The protein localises to the cytoplasm. It localises to the cytoskeleton. The protein resides in the sarcolemma. It is found in the cell projection. Its subcellular location is the podosome. Actin filament (F-actin)-binding protein involved in cell-matrix adhesion and cell-cell adhesion. Regulates cell-surface E-cadherin expression and potentiates mechanosensing by the E-cadherin complex. May also play important roles in cell morphology and locomotion. In Gallus gallus (Chicken), this protein is Vinculin (VCL).